The sequence spans 116 residues: NAD(P)H-quinone oxidoreductase subunit M (116 aa).

It belongs to the complex I NdhM subunit family. As to quaternary structure, NDH-1 can be composed of about 15 different subunits; different subcomplexes with different compositions have been identified which probably have different functions.

The protein localises to the cellular thylakoid membrane. It catalyses the reaction a plastoquinone + NADH + (n+1) H(+)(in) = a plastoquinol + NAD(+) + n H(+)(out). It carries out the reaction a plastoquinone + NADPH + (n+1) H(+)(in) = a plastoquinol + NADP(+) + n H(+)(out). Functionally, NDH-1 shuttles electrons from an unknown electron donor, via FMN and iron-sulfur (Fe-S) centers, to quinones in the respiratory and/or the photosynthetic chain. The immediate electron acceptor for the enzyme in this species is believed to be plastoquinone. Couples the redox reaction to proton translocation, and thus conserves the redox energy in a proton gradient. Cyanobacterial NDH-1 also plays a role in inorganic carbon-concentration. The chain is NAD(P)H-quinone oxidoreductase subunit M from Synechococcus sp. (strain RCC307).